We begin with the raw amino-acid sequence, 361 residues long: MKTIIAAYSGVLRGTGSSLLSAVHDLPNIPWLSKSSVVRHLQIISVLQWVLSFLILGVACTAVLVYIFCTDLWLIAALYLTWMVLDWNTPYKGGRRSSWVRNWAVWRYFRDYFPIKLVKTHNLLPSRNYIFGYHPHGIMCLGAFCNFGTEATGVSKKFPGIKCHLATLAGNFRMPVLREYLMSGGICPVARDTIDYILSKNGTGNAVVIAVGGAAESLNCRPGKNTVTLKQRKGFVKVALQHGADLVPVYSFGENEAYKQVVFEEGSWGRWIQKKFQKYVGFAPCLFHGCSFFSSNSWGLVPYANPITTVVGEPITVPKIEQPTQKDVELYHAMYVTSLQRLFDKYKTKLGLHDSEMLEIV.

The Cytoplasmic segment spans residues 1-42 (MKTIIAAYSGVLRGTGSSLLSAVHDLPNIPWLSKSSVVRHLQ). The chain crosses the membrane as a helical span at residues 43–61 (IISVLQWVLSFLILGVACT). The Lumenal portion of the chain corresponds to 62 to 65 (AVLV). Residues 66–85 (YIFCTDLWLIAALYLTWMVL) form a helical membrane-spanning segment. Topologically, residues 86–361 (DWNTPYKGGR…LHDSEMLEIV (276 aa)) are cytoplasmic.

It belongs to the diacylglycerol acyltransferase family.

It localises to the endoplasmic reticulum membrane. The protein resides in the lipid droplet. The protein localises to the cytoplasm. Its subcellular location is the perinuclear region. It carries out the reaction an acyl-CoA + a 1,2-diacyl-sn-glycerol = a triacyl-sn-glycerol + CoA. The catalysed reaction is all-trans-retinol + an acyl-CoA = an all-trans-retinyl ester + CoA. It catalyses the reaction 2-(9Z-octadecenoyl)-glycerol + (9Z)-octadecenoyl-CoA = 1,2-di-(9Z-octadecenoyl)-sn-glycerol + CoA. The enzyme catalyses 1,2-di-(9Z-octadecenoyl)-sn-glycerol + (9Z)-octadecenoyl-CoA = 1,2,3-tri-(9Z-octadecenoyl)-glycerol + CoA. It carries out the reaction all-trans-retinol + hexadecanoyl-CoA = all-trans-retinyl hexadecanoate + CoA. The catalysed reaction is 1-O-(9Z-octadecenyl)-glycerol + (9Z)-octadecenoyl-CoA = 1-O-(9Z-octadecyl)-3-(9Z-octadecenoyl)-glycerol + CoA. It catalyses the reaction 1-(9Z-octadecenoyl)-glycerol + (9Z)-octadecenoyl-CoA = 1,2-di-(9Z-octadecenoyl)-glycerol + CoA. The enzyme catalyses 1,2-di-(9Z-octadecenoyl)-sn-glycerol + hexadecanoyl-CoA = 1,2-di-(9Z)-octadecenoyl-3-hexadecanoyl-sn-glycerol + CoA. It carries out the reaction 1,3-di-(9Z-octadecenoyl)-glycerol + (9Z)-octadecenoyl-CoA = 1,2,3-tri-(9Z-octadecenoyl)-glycerol + CoA. The catalysed reaction is 2,3-di-(9Z)-octadecenoyl-sn-glycerol + (9Z)-octadecenoyl-CoA = 1,2,3-tri-(9Z-octadecenoyl)-glycerol + CoA. It catalyses the reaction 2-(9Z-octadecenoyl)-glycerol + hexadecanoyl-CoA = 1-hexadecanoyl-2-(9Z-octadecenoyl)-sn-glycerol + CoA. The protein operates within glycerolipid metabolism; triacylglycerol biosynthesis. Its function is as follows. Essential acyltransferase that catalyzes the terminal and only committed step in triacylglycerol synthesis by using diacylglycerol and fatty acyl CoA as substrates. Required for synthesis and storage of intracellular triglycerides. Probably plays a central role in cytosolic lipid accumulation. The sequence is that of Diacylglycerol O-acyltransferase 2 (dgat2) from Xenopus tropicalis (Western clawed frog).